The primary structure comprises 169 residues: MVKNIVLVGFMAVGKTTLGKLLADQLDYNFIDLDLFIEKKESMSISEIFRLKGEAYFRQKESEALDLLSDVEQSVIATGGGTVISEENRSKLKQIGRVIYLEAEPSWILTNIKRSAVIRPLLVDERKSMDKIIEILENRRLYYEGTSEIKIPVSHRTLEEIIKDIVCNI.

12-17 contributes to the ATP binding site; it reads AVGKTT. Thr16 contributes to the Mg(2+) binding site. Residues Asp34, Arg58, and Gly80 each contribute to the substrate site. Residue Arg119 coordinates ATP. Arg139 serves as a coordination point for substrate. An ATP-binding site is contributed by Arg156.

The protein belongs to the shikimate kinase family. Monomer. The cofactor is Mg(2+).

It is found in the cytoplasm. It catalyses the reaction shikimate + ATP = 3-phosphoshikimate + ADP + H(+). Its pathway is metabolic intermediate biosynthesis; chorismate biosynthesis; chorismate from D-erythrose 4-phosphate and phosphoenolpyruvate: step 5/7. Functionally, catalyzes the specific phosphorylation of the 3-hydroxyl group of shikimic acid using ATP as a cosubstrate. This Alkaliphilus oremlandii (strain OhILAs) (Clostridium oremlandii (strain OhILAs)) protein is Shikimate kinase.